The following is a 300-amino-acid chain: UPF0282 protein TON_1363 (300 aa).

It belongs to the UPF0282 family.

In Thermococcus onnurineus (strain NA1), this protein is UPF0282 protein TON_1363.